Here is a 172-residue protein sequence, read N- to C-terminus: 3-hydroxydecanoyl-[acyl-carrier-protein] dehydratase (172 aa).

Residue His71 is part of the active site.

It belongs to the thioester dehydratase family. FabA subfamily. As to quaternary structure, homodimer.

The protein localises to the cytoplasm. The catalysed reaction is a (3R)-hydroxyacyl-[ACP] = a (2E)-enoyl-[ACP] + H2O. The enzyme catalyses (3R)-hydroxydecanoyl-[ACP] = (2E)-decenoyl-[ACP] + H2O. It catalyses the reaction (2E)-decenoyl-[ACP] = (3Z)-decenoyl-[ACP]. It participates in lipid metabolism; fatty acid biosynthesis. In terms of biological role, necessary for the introduction of cis unsaturation into fatty acids. Catalyzes the dehydration of (3R)-3-hydroxydecanoyl-ACP to E-(2)-decenoyl-ACP and then its isomerization to Z-(3)-decenoyl-ACP. Can catalyze the dehydratase reaction for beta-hydroxyacyl-ACPs with saturated chain lengths up to 16:0, being most active on intermediate chain length. This Photorhabdus laumondii subsp. laumondii (strain DSM 15139 / CIP 105565 / TT01) (Photorhabdus luminescens subsp. laumondii) protein is 3-hydroxydecanoyl-[acyl-carrier-protein] dehydratase.